We begin with the raw amino-acid sequence, 77 residues long: uncharacterized protein (77 aa).

Positions 1 to 15 (MNRTSESVEPQQNEK) are enriched in polar residues. Disordered stretches follow at residues 1–20 (MNRT…AVHW) and 31–52 (TYSN…QRTF). Positions 33-44 (SNEDDEDNEEGD) are enriched in acidic residues.

This is an uncharacterized protein from Schizosaccharomyces pombe (strain 972 / ATCC 24843) (Fission yeast).